A 487-amino-acid polypeptide reads, in one-letter code: Histamine H1 receptor (487 aa).

The Extracellular portion of the chain corresponds to 1–29 (MSLPNSSCLLEDKMCEGNKTTMASPQLMP). Residues N5 and N18 are each glycosylated (N-linked (GlcNAc...) asparagine). The helical transmembrane segment at 30 to 50 (LVVVLSTICLVTVGLNLLVLY) threads the bilayer. Topologically, residues 51–64 (AVRSERKLHTVGNL) are cytoplasmic. A helical transmembrane segment spans residues 65-89 (YIVSLSVADLIVGAVVMPMNILYLL). Topologically, residues 90 to 97 (MSKWSLGR) are extracellular. The helical transmembrane segment at 98–123 (PLCLFWLSMDYVASTASIFSVFILCI) threads the bilayer. A disulfide bridge connects residues C100 and C180. Residues D107 and T112 each contribute to the histamine site. An important for agonist binding region spans residues 107-112 (DYVAST). Topologically, residues 124 to 144 (DRYRSVQQPLRYLKYRTKTRA) are cytoplasmic. Residues T140 and T142 each carry the phosphothreonine modification. The chain crosses the membrane as a helical span at residues 145-164 (SATILGAWFLSFLWVIPILG). At 165 to 188 (WNHFMQQTSVRREDKCETDFYDVT) the chain is on the extracellular side. Residues 189 to 211 (WFKVMTAIINFYLPTLLMLWFYA) form a helical membrane-spanning segment. Histamine is bound at residue N198. Topologically, residues 212 to 416 (KIYKAVRQHC…MNRERKAAKQ (205 aa)) are cytoplasmic. S230 bears the Phosphoserine mark. Basic and acidic residues predominate over residues 238–261 (KLRPENPKGDAKKPGKESPWEVLK). The segment at 238–292 (KLRPENPKGDAKKPGKESPWEVLKRKPKDAGGGSVLKSPSQTXKEMKSPVVFSQE) is disordered. At T279 the chain carries Phosphothreonine. Phosphoserine is present on residues S344 and S347. The segment at 345 to 379 (EISEDQMLGDSQSFSRTDSDTTTETAPGKGKLRSG) is disordered. Polar residues predominate over residues 353-369 (GDSQSFSRTDSDTTTET). Phosphoserine occurs at positions 380, 396, and 398. Residues 417-440 (LGFIMAAFILCWIPYFIFFMVIAF) traverse the membrane as a helical segment. Residues 424 to 428 (FILCW) form an important for agonist binding region. Y431 serves as a coordination point for histamine. C441 and C444 are joined by a disulfide. Residues 441–446 (CKNCCN) are Extracellular-facing. The helical transmembrane segment at 447-469 (EHLHMFTIWLGYINSTLNPLIYP) threads the bilayer. The Cytoplasmic portion of the chain corresponds to 470-487 (LCNENFKKTFKRILHIRS).

Belongs to the G-protein coupled receptor 1 family. In terms of processing, phosphorylation at sites in the second and third cytoplasmic loops independently contribute to agonist-induced receptor down-regulation.

The protein localises to the cell membrane. G-protein-coupled receptor for histamine, a biogenic amine that functions as an immune modulator and a neurotransmitter. Through the H1 receptor, histamine mediates the contraction of smooth muscles and increases capillary permeability due to contraction of terminal venules. Also mediates neurotransmission in the central nervous system and thereby regulates circadian rhythms, emotional and locomotor activities as well as cognitive functions. This is Histamine H1 receptor from Pan troglodytes (Chimpanzee).